The following is a 256-amino-acid chain: Small ribosomal subunit protein eS1 (256 aa).

Positions 1-18 (MAVGKNKRLSKGKKGLKK) are enriched in basic residues. A disordered region spans residues 1–22 (MAVGKNKRLSKGKKGLKKKTQD). The residue at position 2 (A2) is an N-acetylalanine; partial.

The protein belongs to the eukaryotic ribosomal protein eS1 family. As to quaternary structure, component of the small ribosomal subunit. Mature ribosomes consist of a small (40S) and a large (60S) subunit. The 40S subunit contains about 33 different proteins and 1 molecule of RNA (18S). The 60S subunit contains about 49 different proteins and 3 molecules of RNA (25S, 5.8S and 5S).

The protein resides in the cytoplasm. This is Small ribosomal subunit protein eS1 from Pyricularia oryzae (strain Y34) (Rice blast fungus).